A 242-amino-acid chain; its full sequence is Acetoacetyl-CoA reductase (242 aa).

NADP(+) contacts are provided by residues R12–I14 and N82–T86. Substrate-binding positions include D88 and Q141–Q144. The Proton acceptor role is filled by Y147. NADP(+) is bound at residue P177–I180. G178 to Y179 serves as a coordination point for substrate.

This sequence belongs to the short-chain dehydrogenases/reductases (SDR) family.

Its subcellular location is the cytoplasm. It carries out the reaction a (3R)-3-hydroxyacyl-CoA + NADP(+) = a 3-oxoacyl-CoA + NADPH + H(+). It functions in the pathway biopolymer metabolism; poly-(R)-3-hydroxybutanoate biosynthesis. The sequence is that of Acetoacetyl-CoA reductase (phaB) from Paracoccus denitrificans.